We begin with the raw amino-acid sequence, 147 residues long: Protein phosphatase 1 regulatory subunit 14A (147 aa).

The segment covering 1–11 (MAAQRLGKRVL) has biased composition (basic residues). The disordered stretch occupies residues 1 to 37 (MAAQRLGKRVLSKLQSPSRARGPGGSPGGLQKRHARV). Position 26 is a phosphoserine (Ser26). The tract at residues 35-120 (ARVTVKYDRR…LLAKLQGLHR (86 aa)) is inhibitory. Phosphothreonine; by PKC is present on Thr38. The tract at residues 118 to 147 (LHRQPGLRQPSPSHDGSLSPLQDRARTAHP) is disordered. The span at 127–137 (PSPSHDGSLSP) shows a compositional bias: polar residues. 3 positions are modified to phosphoserine: Ser128, Ser134, and Ser136.

It belongs to the PP1 inhibitor family. Isoform 1 is detected in aorta and testis. Isoform 2 is detected in aorta.

The protein resides in the cytoplasm. In terms of biological role, inhibitor of PPP1CA. Has over 1000-fold higher inhibitory activity when phosphorylated, creating a molecular switch for regulating the phosphorylation status of PPP1CA substrates and smooth muscle contraction. The protein is Protein phosphatase 1 regulatory subunit 14A (PPP1R14A) of Homo sapiens (Human).